Consider the following 154-residue polypeptide: Xanthine-guanine phosphoribosyltransferase (154 aa).

Residues 37 to 38, R69, and 88 to 96 contribute to the 5-phospho-alpha-D-ribose 1-diphosphate site; these read RG and EDLVDSGDT. R69 contributes to the GMP binding site. D89 is a binding site for Mg(2+). Guanine is bound by residues D92 and I135. Positions 92 and 135 each coordinate xanthine. Residues 92-96 and 134-135 contribute to the GMP site; these read DSGDT and WI.

It belongs to the purine/pyrimidine phosphoribosyltransferase family. XGPT subfamily. Homotetramer. Mg(2+) serves as cofactor.

Its subcellular location is the cell inner membrane. It catalyses the reaction GMP + diphosphate = guanine + 5-phospho-alpha-D-ribose 1-diphosphate. It carries out the reaction XMP + diphosphate = xanthine + 5-phospho-alpha-D-ribose 1-diphosphate. The catalysed reaction is IMP + diphosphate = hypoxanthine + 5-phospho-alpha-D-ribose 1-diphosphate. Its pathway is purine metabolism; GMP biosynthesis via salvage pathway; GMP from guanine: step 1/1. It functions in the pathway purine metabolism; XMP biosynthesis via salvage pathway; XMP from xanthine: step 1/1. Functionally, purine salvage pathway enzyme that catalyzes the transfer of the ribosyl-5-phosphate group from 5-phospho-alpha-D-ribose 1-diphosphate (PRPP) to the N9 position of the 6-oxopurines guanine and xanthine to form the corresponding ribonucleotides GMP (guanosine 5'-monophosphate) and XMP (xanthosine 5'-monophosphate), with the release of PPi. To a lesser extent, also acts on hypoxanthine. This is Xanthine-guanine phosphoribosyltransferase from Vibrio vulnificus (strain CMCP6).